A 434-amino-acid chain; its full sequence is Forkhead box protein A2 (434 aa).

Residues 149 to 243 constitute a DNA-binding region (fork-head); the sequence is KPPYSYISLI…ENGCYLRRQK (95 aa). Residues 249–262 are compositionally biased toward basic and acidic residues; the sequence is KKPSLREGGGKKLS. The segment at 249–339 is disordered; that stretch reads KKPSLREGGG…VLSHEAQSHL (91 aa). Composition is skewed to low complexity over residues 263–291 and 317–333; these read EGSS…SSSP and ASQA…VLSH.

Its subcellular location is the nucleus. Acts as a transcriptional activator during early development, limiting the extent of mesoderm formation in the gastrula. Binds to DNA via the target sequence 5'-GT[AC]AACA-3', with 5'-GTAAACA-3' being the preferred binding site. The polypeptide is Forkhead box protein A2 (Xenopus tropicalis (Western clawed frog)).